Reading from the N-terminus, the 240-residue chain is Probable xyloglucan-specific endo-beta-1,4-glucanase A (240 aa).

The signal sequence occupies residues 1–15 (MKFLTPLVLSSLASA).

The protein belongs to the glycosyl hydrolase 12 (cellulase H) family.

Its subcellular location is the secreted. It catalyses the reaction xyloglucan + H2O = xyloglucan oligosaccharides.. Catalyzes endohydrolysis of 1,4-beta-D-glucosidic linkages in xyloglucan with retention of the beta-configuration of the glycosyl residues. Specific for xyloglucan and does not hydrolyze other cell wall components. The polypeptide is Probable xyloglucan-specific endo-beta-1,4-glucanase A (xgeA) (Aspergillus oryzae (strain ATCC 42149 / RIB 40) (Yellow koji mold)).